The primary structure comprises 134 residues: Small ribosomal subunit protein uS8c (134 aa).

Belongs to the universal ribosomal protein uS8 family. Part of the 30S ribosomal subunit.

It is found in the plastid. The protein resides in the chloroplast. In terms of biological role, one of the primary rRNA binding proteins, it binds directly to 16S rRNA central domain where it helps coordinate assembly of the platform of the 30S subunit. This chain is Small ribosomal subunit protein uS8c (rps8), found in Draba nemorosa (Woodland whitlowgrass).